Consider the following 65-residue polypeptide: Diapause-specific peptide (65 aa).

A signal peptide spans 1–24; that stretch reads MGAALKMTIFLLIVACAMIATTEA. Disulfide bonds link Cys31–Cys45, Cys35–Cys57, and Cys46–Cys64.

As to expression, highly expressed in the fat body.

Its subcellular location is the secreted. Has antifungal activity against T.rubrum. Blocks voltage-dependent N-type calcium channels (Cav2.2 / CACNA1B). The sequence is that of Diapause-specific peptide from Gastrophysa atrocyanea (Leaf beetle).